A 130-amino-acid polypeptide reads, in one-letter code: Small ribosomal subunit protein uS9 (130 aa).

Belongs to the universal ribosomal protein uS9 family.

This is Small ribosomal subunit protein uS9 from Pseudomonas fluorescens (strain ATCC BAA-477 / NRRL B-23932 / Pf-5).